We begin with the raw amino-acid sequence, 264 residues long: Indole-3-glycerol phosphate synthase (264 aa).

This sequence belongs to the TrpC family.

It carries out the reaction 1-(2-carboxyphenylamino)-1-deoxy-D-ribulose 5-phosphate + H(+) = (1S,2R)-1-C-(indol-3-yl)glycerol 3-phosphate + CO2 + H2O. It functions in the pathway amino-acid biosynthesis; L-tryptophan biosynthesis; L-tryptophan from chorismate: step 4/5. The chain is Indole-3-glycerol phosphate synthase from Xylella fastidiosa (strain 9a5c).